The sequence spans 1035 residues: Cell-division control histidine kinase PdhS (1035 aa).

The segment at 1 to 613 is important for polar localization; that stretch reads MSGSYPFIDI…HADGSEEPVD (613 aa). Residues 500–533 are disordered; that stretch reads QGLANTRAESETPVSETSSIEPVEPTPPVKTRSE. The tract at residues 614 to 1035 is interaction with DivK; it reads AHLNAIAWRG…VFPPTRVLAD (422 aa). Residues 659–730 enclose the PAS domain; the sequence is HVEELKTILD…YLHGLSGNGV (72 aa). The Histidine kinase domain maps to 802–1031; sequence RISHEIRTPL…VVEIVFPPTR (230 aa). Position 805 is a phosphohistidine; by autocatalysis (His805).

As to quaternary structure, interacts with DivK.

The protein localises to the cytoplasm. The catalysed reaction is ATP + protein L-histidine = ADP + protein N-phospho-L-histidine.. Functions as a polar differentiation marker. Essential protein that, by localizing in the old pole of dividing cells, controls cell division and maturation, probably through control of DivK phosphorylation status and cellular distribution, which in turn regulates CtrA, a transcriptional regulator of the minB operon. The asymmetrical localization of this protein is probably required for cells to enter a new division cycle. The sequence is that of Cell-division control histidine kinase PdhS (pdhS) from Brucella ovis (strain ATCC 25840 / 63/290 / NCTC 10512).